A 67-amino-acid chain; its full sequence is Large ribosomal subunit protein bL31 (67 aa).

Zn(2+) contacts are provided by Cys-16, Cys-18, Cys-36, and Cys-39.

This sequence belongs to the bacterial ribosomal protein bL31 family. Type A subfamily. Part of the 50S ribosomal subunit. Requires Zn(2+) as cofactor.

Functionally, binds the 23S rRNA. This is Large ribosomal subunit protein bL31 from Treponema pallidum (strain Nichols).